A 443-amino-acid chain; its full sequence is Thymidine phosphorylase (443 aa).

Belongs to the thymidine/pyrimidine-nucleoside phosphorylase family. In terms of assembly, homodimer.

The catalysed reaction is thymidine + phosphate = 2-deoxy-alpha-D-ribose 1-phosphate + thymine. Its pathway is pyrimidine metabolism; dTMP biosynthesis via salvage pathway; dTMP from thymine: step 1/2. In terms of biological role, the enzymes which catalyze the reversible phosphorolysis of pyrimidine nucleosides are involved in the degradation of these compounds and in their utilization as carbon and energy sources, or in the rescue of pyrimidine bases for nucleotide synthesis. The polypeptide is Thymidine phosphorylase (Shewanella sp. (strain MR-4)).